A 369-amino-acid polypeptide reads, in one-letter code: Naringenin,2-oxoglutarate 3-dioxygenase (369 aa).

Residues 193-297 (CVDMDQKVVV…RLSIATFQNP (105 aa)) enclose the Fe2OG dioxygenase domain. The Fe cation site is built by His220, Asp222, and His278. Residue Arg288 participates in 2-oxoglutarate binding.

Belongs to the iron/ascorbate-dependent oxidoreductase family. The cofactor is Fe(2+). L-ascorbate is required as a cofactor.

The enzyme catalyses a (2S)-flavan-4-one + 2-oxoglutarate + O2 = a (2R,3R)-dihydroflavonol + succinate + CO2. It functions in the pathway secondary metabolite biosynthesis; flavonoid biosynthesis. In terms of biological role, catalyzes the 3-beta-hydroxylation of 2S-flavanones to 2R,3R-dihydroflavonols which are intermediates in the biosynthesis of flavonols, anthocyanidins, catechins and proanthocyanidins in plants. This chain is Naringenin,2-oxoglutarate 3-dioxygenase (AN3), found in Petunia hybrida (Petunia).